Reading from the N-terminus, the 110-residue chain is Ribonuclease P protein component 1 (110 aa).

The protein belongs to the eukaryotic/archaeal RNase P protein component 1 family. As to quaternary structure, consists of a catalytic RNA component and at least 4-5 protein subunits.

The protein localises to the cytoplasm. It catalyses the reaction Endonucleolytic cleavage of RNA, removing 5'-extranucleotides from tRNA precursor.. Functionally, part of ribonuclease P, a protein complex that generates mature tRNA molecules by cleaving their 5'-ends. The chain is Ribonuclease P protein component 1 from Methanosarcina barkeri (strain Fusaro / DSM 804).